The primary structure comprises 1315 residues: Chaoptin (1315 aa).

A signal peptide spans 1–29 (MGLEFFFKFGYAFLTITLMIMIWMSLARA). N77 carries N-linked (GlcNAc...) (high mannose) asparagine; alternate glycosylation. N77 is a glycosylation site (N-linked (GlcNAc...) (paucimannose) asparagine; alternate). LRR repeat units follow at residues 80–101 (KVFMLHMENTGLREIEPYFLQS), 103–124 (GMYRLKISGNHLTEIPDDAFTG), 128–149 (SLWELILPQNDLVEIPSKSLRH), 152–173 (KLRHLDLGYNHITHIQHDSFRG), 177–198 (SLQTLILRENCISQLMSHSFSG), 201–222 (ILETLDLSGNNLFEIDPNVFVD), 226–247 (RLTRLLLTDNILSEIPYDALGP), 250–271 (SLRTLDISHNVIWSLSGNETYE), and 279–300 (NLDNLHLEYNHIEVLPPNSFKY). N-linked (GlcNAc...) (paucimannose) asparagine; alternate glycosylation occurs at N267. N267 is a glycosylation site (N-linked (GlcNAc...) (complex) asparagine; alternate). N305 is a glycosylation site (N-linked (GlcNAc...) (high mannose) asparagine; alternate). N305 is a glycosylation site (N-linked (GlcNAc...) (paucimannose) asparagine; alternate). LRR repeat units lie at residues 326–347 (RIREIYMRYCGLTNISPVAFDS), 351–372 (SLQILDLSGNNLTKLHHKLFNN), 375–396 (VLRVISMRDNKIKIQKPTETFN), 401–424 (TLLKLDLSGDRNDPTNLQTLRNMT), 477–498 (GLKRLDFSENGISSIENDAFHE), 527–548 (SLQELDFSNNHISSMSDTSFHF), 551–572 (NLRLLELHDNRIEQVLKGTFQG), 577–598 (KLEEISLRFNHLTSISQHTFFD), 601–622 (ALRKLHLDDNKIDKIERRAFMN), 625–646 (ELEYLSLRGNKINNLADESFQN), 649–670 (KLEILDMAFNQLPNFNFDYFDQ), 676–696 (NLNVNVSHNQIRQLMYNSSWS), 708–729 (NIKILDLSHNNISIIHPGYFRP), 733–754 (SLTHLHLGYNSLMNTTRDVFGN), 757–778 (HLQWLDLSYNWIHELDFDAFKN), 781–802 (QLQLVFFGHNYLSDIPQDIFKP), 805–826 (GLRIVDFSHNHLRGLPDNLFYN), 828–849 (GMEKLDVSHNMMLKIPSSSLSS), 854–875 (TLCELHLSNNFISTIHSMDLSN), 879–900 (SLRYLDISYNYLLRIDDAVFAT), 903–924 (KLAVLDLSHNRDLKVMDKSFMG), 928–948 (SLIKLGLENISLSTVPEIRLK), 949–970 (YLREFRLGYNELPSIPQELAHN), 973–994 (NLRMLDLSNNDLTNVPLMTQAL), 996–1017 (HLRRLMLSGNPITSLNNNSFDG), 1021–1044 (DLEMLDISNFRLHYFEYGCLDSLP), and 1045–1066 (HLRSLKLTAYSHLEHFNIPHLL). N-linked (GlcNAc...) (high mannose) asparagine glycosylation occurs at N361. N-linked (GlcNAc...) asparagine glycosylation is present at N422. N680 carries an N-linked (GlcNAc...) (high mannose) asparagine glycan. The N-linked (GlcNAc...) (high mannose) asparagine; alternate glycan is linked to N692. Residue N692 is glycosylated (N-linked (GlcNAc...) (paucimannose) asparagine; alternate). N718 is a glycosylation site (N-linked (GlcNAc...) (high mannose) asparagine). N-linked (GlcNAc...) asparagine glycosylation occurs at N746. N936 carries N-linked (GlcNAc...) (high mannose) asparagine glycosylation. N-linked (GlcNAc...) (paucimannose) asparagine glycosylation is present at N970. N-linked (GlcNAc...) (complex) asparagine glycosylation is present at N1012. N-linked (GlcNAc...) (high mannose) asparagine glycosylation is found at N1122, N1152, and N1171. The region spanning 1211–1274 (TDLNCDCDLG…DDLRETRCEN (64 aa)) is the LRRCT domain.

This sequence belongs to the chaoptin family. In terms of tissue distribution, expressed in photoreceptor cells and their axons in the adult retina, the ocellus and larval photoreceptor organ.

The protein resides in the cell membrane. Required for photoreceptor cell morphogenesis. Mediates homophilic cellular adhesion. This is Chaoptin (chp) from Drosophila melanogaster (Fruit fly).